Here is a 238-residue protein sequence, read N- to C-terminus: Ribosomal RNA small subunit methyltransferase G (238 aa).

Residues Gly77, Phe82, 128–129 (AE), and Arg147 contribute to the S-adenosyl-L-methionine site.

This sequence belongs to the methyltransferase superfamily. RNA methyltransferase RsmG family.

The protein localises to the cytoplasm. Functionally, specifically methylates the N7 position of guanine in position 535 of 16S rRNA. In Listeria welshimeri serovar 6b (strain ATCC 35897 / DSM 20650 / CCUG 15529 / CIP 8149 / NCTC 11857 / SLCC 5334 / V8), this protein is Ribosomal RNA small subunit methyltransferase G.